We begin with the raw amino-acid sequence, 295 residues long: Acetyl-coenzyme A carboxylase carboxyl transferase subunit beta (295 aa).

Positions 1–20 (MSWLSKLMPSGIRTENTPAK) are disordered. The 268-residue stretch at 28–295 (LWEKCSNCGS…QPHPQDADAA (268 aa)) folds into the CoA carboxyltransferase N-terminal domain. Zn(2+) is bound by residues C32, C35, C51, and C54. The segment at 32-54 (CSNCGSALYGPELEENLEVCPKC) adopts a C4-type zinc-finger fold.

Belongs to the AccD/PCCB family. In terms of assembly, acetyl-CoA carboxylase is a heterohexamer composed of biotin carboxyl carrier protein (AccB), biotin carboxylase (AccC) and two subunits each of ACCase subunit alpha (AccA) and ACCase subunit beta (AccD). The cofactor is Zn(2+).

The protein localises to the cytoplasm. The enzyme catalyses N(6)-carboxybiotinyl-L-lysyl-[protein] + acetyl-CoA = N(6)-biotinyl-L-lysyl-[protein] + malonyl-CoA. The protein operates within lipid metabolism; malonyl-CoA biosynthesis; malonyl-CoA from acetyl-CoA: step 1/1. Functionally, component of the acetyl coenzyme A carboxylase (ACC) complex. Biotin carboxylase (BC) catalyzes the carboxylation of biotin on its carrier protein (BCCP) and then the CO(2) group is transferred by the transcarboxylase to acetyl-CoA to form malonyl-CoA. This chain is Acetyl-coenzyme A carboxylase carboxyl transferase subunit beta, found in Xanthomonas campestris pv. campestris (strain B100).